Consider the following 43-residue polypeptide: Large ribosomal subunit protein bL32 (43 aa).

This sequence belongs to the bacterial ribosomal protein bL32 family.

The polypeptide is Large ribosomal subunit protein bL32 (rpmF) (Carsonella ruddii (strain PV)).